The following is an 834-amino-acid chain: U-box domain-containing protein 33 (834 aa).

The disordered stretch occupies residues 232 to 308; the sequence is FSTPESEHQH…SPSSFPDGVD (77 aa). Polar residues-rich tracts occupy residues 243 to 273 and 284 to 293; these read SRVQ…GSLN and SEVTGSATVM. The stretch at 334-462 forms a coiled coil; the sequence is LRRQKAEKNA…SHAETSTLQL (129 aa). The region spanning 481 to 744 is the Protein kinase domain; the sequence is FDSTLKIGEG…EVWRVLEPMR (264 aa). Residues 487–495 and K508 contribute to the ATP site; that span reads IGEGGYGSI. D603 functions as the Proton acceptor in the catalytic mechanism. A U-box domain is found at 762–834; it reads IAPPYFICPI…AIQEWLQHHL (73 aa).

This sequence belongs to the protein kinase superfamily. Ser/Thr protein kinase family.

The catalysed reaction is L-seryl-[protein] + ATP = O-phospho-L-seryl-[protein] + ADP + H(+). The enzyme catalyses L-threonyl-[protein] + ATP = O-phospho-L-threonyl-[protein] + ADP + H(+). It carries out the reaction S-ubiquitinyl-[E2 ubiquitin-conjugating enzyme]-L-cysteine + [acceptor protein]-L-lysine = [E2 ubiquitin-conjugating enzyme]-L-cysteine + N(6)-ubiquitinyl-[acceptor protein]-L-lysine.. The protein operates within protein modification; protein ubiquitination. Functionally, functions as an E3 ubiquitin ligase. In Arabidopsis thaliana (Mouse-ear cress), this protein is U-box domain-containing protein 33 (PUB33).